Here is a 787-residue protein sequence, read N- to C-terminus: Transcription factor SOX-6 (787 aa).

The tract at residues 1-46 (MSSKQATSPFACAADGEDAMTQDLTSREKEEGSDQHVASHLPLHPI) is disordered. Over residues 25–34 (TSREKEEGSD) the composition is skewed to basic and acidic residues. A Phosphothreonine modification is found at T119. A coiled-coil region spans residues 184–262 (LAEKERQLST…LLQQQIQVQG (79 aa)). Residues 340-429 (PGAKMPSTPQ…KSSIPSPIGG (90 aa)) form a disordered region. Positions 352–361 (NTAGTVSPTG) are enriched in polar residues. Position 358 is a phosphoserine (S358). Residue T360 is modified to Phosphothreonine. Residues K363 and K376 each participate in a glycyl lysine isopeptide (Lys-Gly) (interchain with G-Cter in SUMO) cross-link. Phosphoserine is present on residues S398 and S401. Polar residues predominate over residues 398-420 (SPTSPTQNLFPASKTSPVNLPNK). Residues 580–648 (IKRPMNAFMV…IHLEKYPNYK (69 aa)) constitute a DNA-binding region (HMG box). Residues 712 to 740 (TPSPQMTSDCSSTSASPEPSLPVIQSTYG) show a composition bias toward polar residues. Positions 712-787 (TPSPQMTSDC…NEAPEAVSAN (76 aa)) are disordered. Residues 755 to 768 (NGEDEMEMYDDYED) are compositionally biased toward acidic residues.

As to quaternary structure, homodimer. Interacts with DAZAP2. May interact with CENPK. Sumoylation inhibits the transcriptional activity.

Its subcellular location is the nucleus. It is found in the cytoplasm. Its function is as follows. Transcription factor that plays a key role in several developmental processes, including neurogenesis, chondrocytes differentiation and cartilage formation. Specifically binds the 5'-AACAAT-3' DNA motif present in enhancers and super-enhancers and promotes expression of genes important for chondrogenesis. Required for overt chondrogenesis when condensed prechondrocytes differentiate into early stage chondrocytes: SOX5 and SOX6 cooperatively bind with SOX9 on active enhancers and super-enhancers associated with cartilage-specific genes, and thereby potentiate SOX9's ability to transactivate. Not involved in precartilaginous condensation, the first step in chondrogenesis, during which skeletal progenitors differentiate into prechondrocytes. Together with SOX5, required to form and maintain a pool of highly proliferating chondroblasts between epiphyses and metaphyses, to form columnar chondroblasts, delay chondrocyte prehypertrophy but promote hypertrophy, and to delay terminal differentiation of chondrocytes on contact with ossification fronts. Binds to the proximal promoter region of the myelin protein MPZ gene, and is thereby involved in the differentiation of oligodendroglia in the developing spinal tube. Binds to the gene promoter of MBP and acts as a transcriptional repressor. The sequence is that of Transcription factor SOX-6 from Pongo abelii (Sumatran orangutan).